The sequence spans 605 residues: DNA primase (605 aa).

The CHC2-type zinc finger occupies 37–61 (CPFHADKNPSMHINPIKGFYHCFAC). The region spanning 248 to 329 (KEIIVCEGYM…DGKVAILQGG (82 aa)) is the Toprim domain. Mg(2+) contacts are provided by E254, D298, and D300.

It belongs to the DnaG primase family. In terms of assembly, monomer. Interacts with DnaB. Zn(2+) serves as cofactor. Mg(2+) is required as a cofactor.

The catalysed reaction is ssDNA + n NTP = ssDNA/pppN(pN)n-1 hybrid + (n-1) diphosphate.. Functionally, RNA polymerase that catalyzes the synthesis of short RNA molecules used as primers for DNA polymerase during DNA replication. The polypeptide is DNA primase (Campylobacter jejuni subsp. jejuni serotype O:2 (strain ATCC 700819 / NCTC 11168)).